Consider the following 424-residue polypeptide: Putative chloroquine resistance transporter (424 aa).

Over 1 to 56 (MTGMKKGKNKKKNVKNDERYKELDSLISNDSEIGNNSRWGGAKRICKLIGNEMRNN) the chain is Cytoplasmic. A helical membrane pass occupies residues 57–77 (IYVYLLSILYLCVSVMNKVFS). At 78-88 (KRTLNKIGNYS) the chain is on the vacuolar side. A glycan (N-linked (GlcNAc...) asparagine) is linked at asparagine 86. A helical transmembrane segment spans residues 89–109 (FVTSEVHNMICTIVFQLLYFI). Residues 110–125 (YRKTSNPASRNESQKN) are Cytoplasmic-facing. The chain crosses the membrane as a helical span at residues 126 to 146 (FGWQFFLISLLDASTVIITMI). The Vacuolar segment spans residues 147–156 (GLTRTTGNIQ). The helical transmembrane segment at 157-177 (SFIMQLIIPVNMYFCFIFLGY) threads the bilayer. The Cytoplasmic segment spans residues 178–180 (RYH). Residues 181–201 (LFNYLGAFIILITIAAVETVL) traverse the membrane as a helical segment. At 202-209 (SYETQSDN) the chain is on the vacuolar side. A helical membrane pass occupies residues 210-230 (SIIFNLIMIFALIPLSFSNMT). Residues 231–248 (REVVFKKHKINIIRLNAM) lie on the Cytoplasmic side of the membrane. Residues 249 to 269 (VALFQFFTSLLVLPVYNISFL) form a helical membrane-spanning segment. Topologically, residues 270–317 (KEIYMPFSEMGTNINDGLRCLFYGQSTIVENCGVGMVKMCDQCEGAWK) are vacuolar. 2 cysteine pairs are disulfide-bonded: cysteine 289–cysteine 312 and cysteine 301–cysteine 309. The helical transmembrane segment at 318–338 (TFITYSFFNICDNLLVCYIID) threads the bilayer. Residues 339–346 (KFSTMTYT) lie on the Cytoplasmic side of the membrane. A helical membrane pass occupies residues 347 to 367 (IVSCIQGPAITIAYYFKFLAG). The Vacuolar segment spans residues 368–377 (DVVRQPRLLD). Residues 378-398 (FLTLFGYLLGTIIYRIGNIIL) form a helical membrane-spanning segment. Over 399–424 (EKKKMLKALNTDGSEAELTSIETSTA) the chain is Cytoplasmic.

This sequence belongs to the CRT-like transporter family.

It localises to the vacuole membrane. Nutrient transporter. Involved in maintaining the osmotic homeostasis of the digestive vacuole. The polypeptide is Putative chloroquine resistance transporter (Plasmodium chabaudi).